The chain runs to 315 residues: Methylglutaconyl-CoA hydratase, mitochondrial (315 aa).

The N-terminal 43 residues, 1 to 43 (MAAAAAPGALGALSAGRVRLVAACCARLGSAAWARGTAPRRGY), are a transit peptide targeting the mitochondrion. Lys-76 is modified (N6-acetyllysine; alternate). The residue at position 76 (Lys-76) is an N6-succinyllysine; alternate. The tract at residues 81-95 (KNLLKMLSKAVDALK) is RNA-binding. Position 85 is an N6-succinyllysine (Lys-85). N6-acetyllysine; alternate occurs at positions 89 and 120. Residues Lys-89 and Lys-120 each carry the N6-succinyllysine; alternate modification. N6-succinyllysine is present on residues Lys-124 and Lys-136. N6-acetyllysine; alternate occurs at positions 180 and 187. Lys-180 and Lys-187 each carry N6-succinyllysine; alternate. Residue Lys-305 is modified to N6-succinyllysine.

This sequence belongs to the enoyl-CoA hydratase/isomerase family. In terms of assembly, homohexamer.

The protein resides in the mitochondrion. The catalysed reaction is (3S)-3-hydroxy-3-methylglutaryl-CoA = 3-methyl-(2E)-glutaconyl-CoA + H2O. It carries out the reaction (3S)-citramalyl-CoA = itaconyl-CoA + H2O. The enzyme catalyses 3-hydroxyisovaleryl-CoA = 3-methylbut-2-enoyl-CoA + H2O. It catalyses the reaction (S)-3-hydroxyglutaryl-CoA = (2E)-glutaconyl-CoA + H2O. The protein operates within amino-acid degradation; L-leucine degradation; (S)-3-hydroxy-3-methylglutaryl-CoA from 3-isovaleryl-CoA: step 3/3. Functionally, catalyzes the fifth step in the leucine degradation pathway, the reversible hydration of 3-methylglutaconyl-CoA (3-MG-CoA) to 3-hydroxy-3-methylglutaryl-CoA (HMG-CoA). Can catalyze the reverse reaction but at a much lower rate in vitro. HMG-CoA is then quickly degraded by another enzyme (such as HMG-CoA lyase) to give acetyl-CoA and acetoacetate. Uses other substrates such as (2E)-glutaconyl-CoA efficiently in vitro, and to a lesser extent 3-methylcrotonyl-CoA (3-methyl-(2E)-butenoyl-CoA), crotonyl-CoA ((2E)-butenoyl-CoA) and 3-hydroxybutanoyl-CoA (the missing carboxylate reduces affinity to the active site). Originally it was identified as an RNA-binding protein as it binds to AU-rich elements (AREs) in vitro. AREs direct rapid RNA degradation and mRNA deadenylation. Might have itaconyl-CoA hydratase activity, converting itaconyl-CoA into citramalyl-CoA in the C5-dicarboxylate catabolism pathway. The C5-dicarboxylate catabolism pathway is required to detoxify itaconate, an antimicrobial metabolite and immunomodulator produced by macrophages during certain infections, that can act as a vitamin B12-poisoning metabolite. In Rattus norvegicus (Rat), this protein is Methylglutaconyl-CoA hydratase, mitochondrial.